A 512-amino-acid polypeptide reads, in one-letter code: Glutamyl-tRNA(Gln) amidotransferase subunit A (512 aa).

Catalysis depends on charge relay system residues Lys-82 and Ser-157. Ser-181 serves as the catalytic Acyl-ester intermediate.

This sequence belongs to the amidase family. GatA subfamily. As to quaternary structure, heterotrimer of A, B and C subunits.

The catalysed reaction is L-glutamyl-tRNA(Gln) + L-glutamine + ATP + H2O = L-glutaminyl-tRNA(Gln) + L-glutamate + ADP + phosphate + H(+). Its function is as follows. Allows the formation of correctly charged Gln-tRNA(Gln) through the transamidation of misacylated Glu-tRNA(Gln) in organisms which lack glutaminyl-tRNA synthetase. The reaction takes place in the presence of glutamine and ATP through an activated gamma-phospho-Glu-tRNA(Gln). This chain is Glutamyl-tRNA(Gln) amidotransferase subunit A, found in Bordetella bronchiseptica (strain ATCC BAA-588 / NCTC 13252 / RB50) (Alcaligenes bronchisepticus).